A 459-amino-acid polypeptide reads, in one-letter code: ATP synthase subunit beta (459 aa).

An ATP-binding site is contributed by 148 to 155; the sequence is GGAGVGKT.

Belongs to the ATPase alpha/beta chains family. F-type ATPases have 2 components, CF(1) - the catalytic core - and CF(0) - the membrane proton channel. CF(1) has five subunits: alpha(3), beta(3), gamma(1), delta(1), epsilon(1). CF(0) has three main subunits: a(1), b(2) and c(9-12). The alpha and beta chains form an alternating ring which encloses part of the gamma chain. CF(1) is attached to CF(0) by a central stalk formed by the gamma and epsilon chains, while a peripheral stalk is formed by the delta and b chains.

It is found in the cell inner membrane. The catalysed reaction is ATP + H2O + 4 H(+)(in) = ADP + phosphate + 5 H(+)(out). Produces ATP from ADP in the presence of a proton gradient across the membrane. The catalytic sites are hosted primarily by the beta subunits. The protein is ATP synthase subunit beta of Vesicomyosocius okutanii subsp. Calyptogena okutanii (strain HA).